Consider the following 1075-residue polypeptide: mRNA-binding protein PUF2 (1075 aa).

The tract at residues 38 to 68 (NTNARSVRVSDKRGRSSSTSPQKIGSYRTRA) is disordered. Residue Ser72 is modified to Phosphoserine. Positions 93–105 (TPVVVVPPTSSTP) are enriched in low complexity. Residues 93–112 (TPVVVVPPTSSTPDSLNSTT) are disordered. Ser198 carries the phosphoserine modification. Residues 316-402 (NTISISNVFP…APSTVSFARV (87 aa)) form the RRM domain. Residues 511–872 (ELNHLLQNAL…QLLEEVGLSS (362 aa)) form the PUM-HD domain. Pumilio repeat units follow at residues 574 to 611 (AIVMLDQLPELSSDYLGNTVIQKLFENSSNIIRDIMLR), 612 to 647 (KCNKYLTSMGVHKNGTWVCQKIIKMANTPRQINLVT), 649 to 683 (GVSDYCTPLFNDQFGNYVIQGILKFGFPWNSFIFE), 684 to 719 (SVLSHFWTIVQNRYGSRAVRACLEADSIITQCQLLT), 722 to 758 (SLIIVLSPYLATDTNGTLLITWLLDTCTLPNKNLILC), and 760 to 800 (KLVN…KIIH). Residues Ser872 and Ser876 each carry the phosphoserine modification. 2 disordered regions span residues 874 to 931 (GISP…LNFN) and 997 to 1075 (NNYN…SYGY). 3 stretches are compositionally biased toward low complexity: residues 901–916 (VSVSSVRSSNSRHNSV), 997–1009 (NNYNNSGYSSQMN), and 1018–1063 (NNNN…NNNN).

The protein localises to the cytoplasm. RNA-binding protein involved in post-transcriptional regulation. Negatively regulates expression of COX17 by binding to the 3'-UTR of COX17 mRNA. Promotes decay of COX17 mRNA by enhancing its rate of deadenylation and subsequent turnover. Predominantly binds to mRNAs encoding membrane-associated proteins with roles in transmembrane transport and vesicular trafficking. The sequence is that of mRNA-binding protein PUF2 (PUF2) from Saccharomyces cerevisiae (strain ATCC 204508 / S288c) (Baker's yeast).